The chain runs to 174 residues: Crossover junction endodeoxyribonuclease RuvC (174 aa).

Catalysis depends on residues Asp-8, Glu-68, and Asp-140. Mg(2+) is bound by residues Asp-8, Glu-68, and Asp-140.

Belongs to the RuvC family. Homodimer which binds Holliday junction (HJ) DNA. The HJ becomes 2-fold symmetrical on binding to RuvC with unstacked arms; it has a different conformation from HJ DNA in complex with RuvA. In the full resolvosome a probable DNA-RuvA(4)-RuvB(12)-RuvC(2) complex forms which resolves the HJ. Mg(2+) serves as cofactor.

The protein localises to the cytoplasm. The enzyme catalyses Endonucleolytic cleavage at a junction such as a reciprocal single-stranded crossover between two homologous DNA duplexes (Holliday junction).. In terms of biological role, the RuvA-RuvB-RuvC complex processes Holliday junction (HJ) DNA during genetic recombination and DNA repair. Endonuclease that resolves HJ intermediates. Cleaves cruciform DNA by making single-stranded nicks across the HJ at symmetrical positions within the homologous arms, yielding a 5'-phosphate and a 3'-hydroxyl group; requires a central core of homology in the junction. The consensus cleavage sequence is 5'-(A/T)TT(C/G)-3'. Cleavage occurs on the 3'-side of the TT dinucleotide at the point of strand exchange. HJ branch migration catalyzed by RuvA-RuvB allows RuvC to scan DNA until it finds its consensus sequence, where it cleaves and resolves the cruciform DNA. The sequence is that of Crossover junction endodeoxyribonuclease RuvC from Legionella pneumophila (strain Lens).